Consider the following 447-residue polypeptide: MTTILKHLPVGQRIGIAFSGGLDTSAALLWMRKKGAVPYAYTANLGQPDEDDYDAIPRRAKEYGAEGARLIDCRKQLVAEGIAAIQCGAFHNTTGGLTYFNTTPLGRAVTGTMLVAAMKEDGVNIWGDGSTYKGNDIERFYRYGLLTNAELQIYKPWLDSDFIDELGGRHEMSEFMIACGFDYKMSVEKAYSTDSNMLGATHEAKDLEFLNSSVKIVNPIMGVKFWDENVKIPAEEVTVLFEQGHPVALNGKTFADDVEMMLEANRIGGRHGLGMSDQIENRIIEAKSRGIYEAPGMALLHIAYERLLTGIHNEDTIEQYHAHGRQLGRLLYQGRWFDSQALMLRDSLQRWVASQITGEVTLELRRGNDYSILNTVSDNLTYKAERLTMEKGDSMFTAEDRIGQLTMRNLDITDTREKLFGYAQSGLLSASSATGLPQVENLENKGK.

Residues alanine 17–serine 25 and alanine 43 each bind ATP. An L-citrulline-binding site is contributed by tyrosine 99. 2 residues coordinate ATP: glycine 129 and threonine 131. Residues threonine 131, asparagine 135, and aspartate 136 each coordinate L-aspartate. Residue asparagine 135 coordinates L-citrulline. An ATP-binding site is contributed by aspartate 136. The L-citrulline site is built by arginine 139 and serine 192. Aspartate 194 contacts ATP. Positions 201, 203, and 280 each coordinate L-citrulline.

Belongs to the argininosuccinate synthase family. Type 2 subfamily. In terms of assembly, homotetramer.

The protein resides in the cytoplasm. It carries out the reaction L-citrulline + L-aspartate + ATP = 2-(N(omega)-L-arginino)succinate + AMP + diphosphate + H(+). The protein operates within amino-acid biosynthesis; L-arginine biosynthesis; L-arginine from L-ornithine and carbamoyl phosphate: step 2/3. In Klebsiella pneumoniae (strain 342), this protein is Argininosuccinate synthase.